Here is a 21-residue protein sequence, read N- to C-terminus: Cutinase 2 (21 aa).

Belongs to the cutinase family.

Its subcellular location is the secreted. It catalyses the reaction cutin + H2O = cutin monomers.. Inhibited by diisopropyl fluorophosphate (DFP). Functionally, catalyzes the hydrolysis of complex carboxylic polyesters found in the cell wall of plants. Degrades cutin, a macromolecule that forms the structure of the plant cuticle. Allows pathogenic fungi to penetrate through the cuticular barrier into the host plant during the initial stage of fungal infection. This Colletotrichum gloeosporioides (Anthracnose fungus) protein is Cutinase 2.